The sequence spans 291 residues: N-acetylmannosamine kinase (291 aa).

ATP is bound by residues 5-12 (AIDIGGTK) and 132-139 (GVGGGVVC). Zn(2+) is bound by residues His-156, Cys-166, Cys-168, and Cys-173.

The protein belongs to the ROK (NagC/XylR) family. NanK subfamily. As to quaternary structure, homodimer.

It carries out the reaction an N-acyl-D-mannosamine + ATP = an N-acyl-D-mannosamine 6-phosphate + ADP + H(+). It functions in the pathway amino-sugar metabolism; N-acetylneuraminate degradation; D-fructose 6-phosphate from N-acetylneuraminate: step 2/5. Functionally, catalyzes the phosphorylation of N-acetylmannosamine (ManNAc) to ManNAc-6-P. The sequence is that of N-acetylmannosamine kinase from Salmonella arizonae (strain ATCC BAA-731 / CDC346-86 / RSK2980).